Consider the following 217-residue polypeptide: Redox-sensing transcriptional repressor Rex (217 aa).

The H-T-H motif DNA-binding region spans 18-57 (LYYRFLKNLHASGKQRVSSAELSDAVKVDSATIRRDFSYF). An NAD(+)-binding site is contributed by 92-97 (GVGNLG).

This sequence belongs to the transcriptional regulatory Rex family. In terms of assembly, homodimer.

The protein resides in the cytoplasm. Its function is as follows. Modulates transcription in response to changes in cellular NADH/NAD(+) redox state. The polypeptide is Redox-sensing transcriptional repressor Rex (Bacillus pumilus (strain SAFR-032)).